We begin with the raw amino-acid sequence, 158 residues long: UPF0262 protein Rsph17029_2283 (158 aa).

Belongs to the UPF0262 family.

The polypeptide is UPF0262 protein Rsph17029_2283 (Cereibacter sphaeroides (strain ATCC 17029 / ATH 2.4.9) (Rhodobacter sphaeroides)).